The following is a 64-amino-acid chain: Beta-defensin 13 (64 aa).

The first 22 residues, 1 to 22, serve as a signal peptide directing secretion; sequence MRIFSLIVAGLVLLIQLYPAWG. Intrachain disulfides connect Cys-30–Cys-57, Cys-37–Cys-51, and Cys-41–Cys-58.

It belongs to the beta-defensin family. As to expression, expressed in testis and to a lesser extent in epididymis (caput, corpus and cauda). Also weakly expressed in kidneys.

The protein localises to the secreted. Its function is as follows. Has antibacterial activity. This chain is Beta-defensin 13 (Defb13), found in Mus musculus (Mouse).